The following is a 424-amino-acid chain: Tol-Pal system protein TolB (424 aa).

The signal sequence occupies residues 1–16; that stretch reads MKQLLVLILSLYTTLA.

Belongs to the TolB family. In terms of assembly, the Tol-Pal system is composed of five core proteins: the inner membrane proteins TolA, TolQ and TolR, the periplasmic protein TolB and the outer membrane protein Pal. They form a network linking the inner and outer membranes and the peptidoglycan layer.

The protein resides in the periplasm. Functionally, part of the Tol-Pal system, which plays a role in outer membrane invagination during cell division and is important for maintaining outer membrane integrity. The sequence is that of Tol-Pal system protein TolB from Ruthia magnifica subsp. Calyptogena magnifica.